We begin with the raw amino-acid sequence, 72 residues long: Translation initiation factor IF-1 (72 aa).

The region spanning 1–72 (MSKEELLEFP…TKGRITYRFK (72 aa)) is the S1-like domain.

The protein belongs to the IF-1 family. In terms of assembly, component of the 30S ribosomal translation pre-initiation complex which assembles on the 30S ribosome in the order IF-2 and IF-3, IF-1 and N-formylmethionyl-tRNA(fMet); mRNA recruitment can occur at any time during PIC assembly.

It localises to the cytoplasm. Functionally, one of the essential components for the initiation of protein synthesis. Stabilizes the binding of IF-2 and IF-3 on the 30S subunit to which N-formylmethionyl-tRNA(fMet) subsequently binds. Helps modulate mRNA selection, yielding the 30S pre-initiation complex (PIC). Upon addition of the 50S ribosomal subunit IF-1, IF-2 and IF-3 are released leaving the mature 70S translation initiation complex. The protein is Translation initiation factor IF-1 of Parvibaculum lavamentivorans (strain DS-1 / DSM 13023 / NCIMB 13966).